The primary structure comprises 361 residues: P2Y purinoceptor 4 (361 aa).

The segment at 1-20 (MTSAESLLFTSLGPSPSSGD) is disordered. The Extracellular portion of the chain corresponds to 1-30 (MTSAESLLFTSLGPSPSSGDGDCRFNEEFK). The helical transmembrane segment at 31-58 (FILLPMSYAVVFVLGLALNAPTLWLFLF) threads the bilayer. Topologically, residues 59 to 68 (RLRPWDATAT) are cytoplasmic. Residues 69-91 (YMFHLALSDTLYVLSLPTLVYYY) form a helical membrane-spanning segment. Over 92-108 (AARNHWPFGTGLCKFVR) the chain is Extracellular. Cysteine 104 and cysteine 181 are oxidised to a cystine. A helical transmembrane segment spans residues 109-127 (FLFYWNLYCSVLFLTCISV). Residues 128–149 (HRYLGICHPLRAIRWGRPRFAS) lie on the Cytoplasmic side of the membrane. Residues 150-170 (LLCLGVWLVVAGCLVPNLFFV) traverse the membrane as a helical segment. Residues 171-192 (TTNANGTTILCHDTTLPEEFDH) lie on the Extracellular side of the membrane. An N-linked (GlcNAc...) asparagine glycan is attached at asparagine 175. A helical membrane pass occupies residues 193–218 (YVYFSSAVMVLLFGLPFLITLVCYGL). The Cytoplasmic segment spans residues 219–242 (MARRLYRPLPGAGQSSSRLRSLRT). Residues 243-265 (IAVVLTVFAVCFVPFHITRTIYY) form a helical membrane-spanning segment. Residues 266–283 (QARLLQADCHVLNIVNVV) are Extracellular-facing. The chain crosses the membrane as a helical span at residues 284–305 (YKVTRPLASANSCLDPVLYLFT). Over 306–361 (GDKYRNQLQQLCRGSKPKPRTAASSLALVTLHEESISRWADTHQDSTFSAYEGDRL) the chain is Cytoplasmic.

Belongs to the G-protein coupled receptor 1 family. Post-translationally, phosphorylation of Ser-329 and Ser-330 is a key step in agonist-dependent desensitization and loss of surface P2RY4. This phosphorylation does not involve PKC, nor other calcium-activated kinases. As to expression, widely expressed at low levels. In brain, higher expression in the pineal gland and ventricular system.

It is found in the cell membrane. Its function is as follows. Receptor for ATP and UTP coupled to G-proteins that activate a phosphatidylinositol-calcium second messenger system. Not activated by ADP or UDP. This is P2Y purinoceptor 4 (P2ry4) from Rattus norvegicus (Rat).